Consider the following 350-residue polypeptide: MLEQLQTLKSEAETQINEASDLKTLNDLRVKYLGKKGPMTEIMKQMGKLSAEERPKMGSLANEVRTALTEAISSKQQILETEAINEKLKSETIDVTLPGTAPSIGTKHLLTQVIEEMEDMFIGMGYEIAEGPEVELDYYNFEALNLPKDHPARDMQDSFYITENTLLRTQTSPVQARTMEKHDFSKGPIKVICPGKVYRRDNDDATHSHQFTQIEGLVVGENITFADLKGTLTVLAKTMFGEEREIRLRPSFFPFTEPSVEMDISCFKCGGKGCRVCKGTGWIEILGSGMVHPNVLEMSGIDSTRYSGFAFGLGPERVAMLKYAVDDIRHLYTNDLRFTKQFQSTETGEI.

Glu-257 is a binding site for Mg(2+).

Belongs to the class-II aminoacyl-tRNA synthetase family. Phe-tRNA synthetase alpha subunit type 1 subfamily. In terms of assembly, tetramer of two alpha and two beta subunits. It depends on Mg(2+) as a cofactor.

Its subcellular location is the cytoplasm. The catalysed reaction is tRNA(Phe) + L-phenylalanine + ATP = L-phenylalanyl-tRNA(Phe) + AMP + diphosphate + H(+). The polypeptide is Phenylalanine--tRNA ligase alpha subunit (Listeria monocytogenes serovar 1/2a (strain ATCC BAA-679 / EGD-e)).